Reading from the N-terminus, the 285-residue chain is UPF0354 protein MW1686 (285 aa).

It belongs to the UPF0354 family.

In Staphylococcus aureus (strain MW2), this protein is UPF0354 protein MW1686.